Consider the following 154-residue polypeptide: Snaclec EMS16 subunit beta (154 aa).

The first 26 residues, 1–26 (MGRLISVRFSLLVVFLSLSGIGAGLC), serve as a signal peptide directing secretion. Cys27 and Cys38 form a disulfide bridge. Positions 34-147 (FDQHCYKVFE…CEKSVSFVCK (114 aa)) constitute a C-type lectin domain. N-linked (GlcNAc...) asparagine glycosylation is present at Asn47. 2 cysteine pairs are disulfide-bonded: Cys55-Cys146 and Cys121-Cys138.

This sequence belongs to the snaclec family. In terms of assembly, heterodimer of subunits A and B; disulfide-linked. Expressed by the venom gland.

The protein resides in the secreted. Functionally, EMS16 is a potent and selective inhibitor of alpha-2/beta-1 (ITGA2/ITGB1) integrin and acts as a potent antagonist of platelet aggregation and cell migration. Binds specifically to the I domain of the alpha-2 subunit, in a metal ion-independent fashion. The chain is Snaclec EMS16 subunit beta from Echis multisquamatus (Central Asian sand viper).